A 1111-amino-acid chain; its full sequence is Cell death abnormality protein 1 (1111 aa).

Residues 1–18 (MRLILLVLLATWQVVVDT) form the signal peptide. The Extracellular portion of the chain corresponds to 19 to 910 (RAPTFPDKLT…NGAGRSTGLT (892 aa)). The EMI domain maps to 41-113 (GDHVCTVKTI…QCCDGYYQTK (73 aa)). Disulfide bonds link Cys45-Cys106, Cys71-Cys80, Cys105-Cys117, Cys121-Cys130, Cys125-Cys136, Cys138-Cys147, Cys160-Cys172, Cys166-Cys179, Cys181-Cys190, Cys203-Cys215, Cys209-Cys221, Cys223-Cys232, Cys245-Cys257, Cys251-Cys264, and Cys266-Cys275. Asn66 is a glycosylation site (N-linked (GlcNAc...) asparagine). EGF-like domains follow at residues 118 to 148 (LPDC…KYCA), 156 to 191 (WGLG…ERCE), 199 to 233 (WGPN…EFCL), and 241 to 276 (FGAE…ALCE). Asn333 and Asn345 each carry an N-linked (GlcNAc...) asparagine glycan. The EGF-like 5 domain occupies 421-458 (YGPNCEKQAMCDWNHASECNPETGSCVCKPGRTGKNCS). Disulfide bonds link Cys425–Cys439, Cys431–Cys446, and Cys448–Cys457. An N-linked (GlcNAc...) asparagine glycan is attached at Asn456. The FU repeat unit spans residues 629-680 (DQKCDPNTFGFLCQETVTPSPCASTDPKNGVCLSCPPGSSGIHCEHNCPAGS). The region spanning 681–716 (YGDGCQQVCSCADGHGCDPTTGECICEPGYHGKTCS) is the EGF-like 6 domain. Disulfide bonds link Cys685–Cys697, Cys691–Cys704, and Cys706–Cys715. The helical transmembrane segment at 911-931 (WFFVLLIVALCGGLGLIALFY) threads the bilayer. Residues 931 to 1007 (YRNKYQKEKD…EEELENKKIH (77 aa)) are interaction with trim-21. Residues 932 to 1111 (RNKYQKEKDP…KKRAQDNLYT (180 aa)) are Cytoplasmic-facing. 2 disordered regions span residues 940–993 (DPDM…PNGL) and 1006–1111 (IHGR…NLYT). The NPXY signature appears at 962–965 (NPLY). Positions 963 to 980 (PLYSRQSVFPDSDAFSSE) are enriched in polar residues. Tyr1019 carries the phosphotyrosine; by SRC modification. The short motif at 1019-1022 (YASL) is the YXXL element. Low complexity predominate over residues 1030–1039 (SSSSASASAS). Over residues 1068-1083 (NSISPAHAVTTSNHNE) the composition is skewed to polar residues.

As to quaternary structure, interacts (via C-terminus) with ced-6 (via PTB domain). Interacts with nck-1; the interaction is required for ced-1 degradation through the proteasome pathway. Interacts with V-ATPase vha-10. In terms of processing, phosphorylation of Tyr-1019, within the YXXL motif, by src-1 is thought to initiate phagosomal formation. 'Lys-48'-linked polyubiquitination by trim-21 leads to proteasomal degradation. Expressed in engulfing cells and syncytium hypodermal cells. Ced-7 is necessary for clustering around cell corpses prior to engulfment.

The protein localises to the cell membrane. It localises to the cytoplasmic vesicle. The protein resides in the phagosome membrane. Involved in programmed cell death, also called apoptosis, in both somatic and germ cells. Acts by recruiting ced-6 to phagosomes which enables actin-dependent cytoskeletal reorganization and subsequent engulfment of the apoptotic cell corpse. Has a role in the association of ppk-3 and rab-7 with the phagosomal surface which is necessary for the incorporation of lysosomes to phagosomes during phagosome maturation. Activates the expression of unfolded protein response genes, which are involved in the immune response to live bacteria. This is Cell death abnormality protein 1 from Caenorhabditis elegans.